We begin with the raw amino-acid sequence, 504 residues long: ATP-dependent RNA helicase DBP3 (504 aa).

The span at M1–E14 shows a compositional bias: basic and acidic residues. The disordered stretch occupies residues M1 to S65. Residues S20–K53 are compositionally biased toward basic residues. The Q motif signature appears at L94 to A120. One can recognise a Helicase ATP-binding domain in the interval W123–V296. A136–T143 contacts ATP. The short motif at D243 to D246 is the DEAD box element. Residues K325–G474 form the Helicase C-terminal domain.

This sequence belongs to the DEAD box helicase family. DDX5/DBP2 subfamily.

The protein localises to the nucleus. It localises to the nucleolus. It catalyses the reaction ATP + H2O = ADP + phosphate + H(+). Functionally, ATP-dependent RNA helicase required for 60S ribosomal subunit synthesis. Involved in efficient pre-rRNA processing, predominantly at site A3, which is necessary for the normal formation of 25S and 5.8S rRNAs. In Kluyveromyces lactis (strain ATCC 8585 / CBS 2359 / DSM 70799 / NBRC 1267 / NRRL Y-1140 / WM37) (Yeast), this protein is ATP-dependent RNA helicase DBP3 (DBP3).